A 101-amino-acid polypeptide reads, in one-letter code: Small ribosomal subunit protein uS14 (101 aa).

Belongs to the universal ribosomal protein uS14 family. As to quaternary structure, part of the 30S ribosomal subunit. Contacts proteins S3 and S10.

Binds 16S rRNA, required for the assembly of 30S particles and may also be responsible for determining the conformation of the 16S rRNA at the A site. The protein is Small ribosomal subunit protein uS14 of Paraburkholderia phytofirmans (strain DSM 17436 / LMG 22146 / PsJN) (Burkholderia phytofirmans).